Here is a 250-residue protein sequence, read N- to C-terminus: Triosephosphate isomerase (250 aa).

10–12 (NWK) lines the substrate pocket. The active-site Electrophile is His96. The active-site Proton acceptor is Glu168. Residues Gly174, Ser214, and 235–236 (GG) each bind substrate.

The protein belongs to the triosephosphate isomerase family. Homodimer.

The protein localises to the cytoplasm. It carries out the reaction D-glyceraldehyde 3-phosphate = dihydroxyacetone phosphate. Its pathway is carbohydrate biosynthesis; gluconeogenesis. It participates in carbohydrate degradation; glycolysis; D-glyceraldehyde 3-phosphate from glycerone phosphate: step 1/1. Its function is as follows. Involved in the gluconeogenesis. Catalyzes stereospecifically the conversion of dihydroxyacetone phosphate (DHAP) to D-glyceraldehyde-3-phosphate (G3P). The chain is Triosephosphate isomerase from Streptococcus suis (strain 98HAH33).